Consider the following 149-residue polypeptide: Transcriptional repressor NrdR (149 aa).

A zinc finger spans residues 3 to 34 (CPFCSAVDTKVIDSRLVGEGSQVRRRRQCLVC). Positions 49–139 (PRVIKSNEVR…VYRSFEDIRE (91 aa)) constitute an ATP-cone domain.

This sequence belongs to the NrdR family. The cofactor is Zn(2+).

In terms of biological role, negatively regulates transcription of bacterial ribonucleotide reductase nrd genes and operons by binding to NrdR-boxes. In Pectobacterium atrosepticum (strain SCRI 1043 / ATCC BAA-672) (Erwinia carotovora subsp. atroseptica), this protein is Transcriptional repressor NrdR.